Consider the following 800-residue polypeptide: Heterogeneous nuclear ribonucleoprotein U (800 aa).

Ser2 carries the N-acetylserine modification. A Phosphoserine modification is found at Ser4. The region spanning 8-42 (VKKLKVSELKEELKKRRLSDKGLKADLMDRLQAAL) is the SAP domain. N6-acetyllysine is present on residues Lys17 and Lys21. Positions 41-257 (ALDNEAGGRP…PQPPVEEEDE (217 aa)) are disordered. Ser58 is modified (phosphoserine). 2 stretches are compositionally biased toward low complexity: residues 71–80 (AGLEQEAAAG) and 103–113 (ENGAAGAADAG). Acidic residues-rich tracts occupy residues 114-128 (AMEE…ENGD) and 134-147 (EGED…EGAG). Residues 153 to 173 (GEQQSQPPAAAAQQQPSQQRG) are compositionally biased toward low complexity. An N6-acetyllysine modification is found at Lys181. Position 182 is an ADP-ribosylserine (Ser182). Low complexity predominate over residues 194-205 (APPGARQGQQQA). The span at 209–242 (GKTEQKGGDKKRGVKRPREDHGRGYFEYIEENKY) shows a compositional bias: basic and acidic residues. At Arg231 the chain carries Citrulline. The residue at position 241 (Lys241) is an N6-acetyllysine; alternate. Lys241 is covalently cross-linked (Glycyl lysine isopeptide (Lys-Gly) (interchain with G-Cter in SUMO1); alternate). A Glycyl lysine isopeptide (Lys-Gly) (interchain with G-Cter in SUMO2); alternate cross-link involves residue Lys241. A Phosphotyrosine modification is found at Tyr242. Phosphoserine is present on residues Ser243 and Ser247. A B30.2/SPRY domain is found at 244–440 (RAKSPQPPVE…VEFNFGQKEK (197 aa)). Thr262 carries the phosphothreonine modification. Lys328 bears the N6-acetyllysine mark. The interval 464-648 (PKGPEEKKDC…QKLLEQYKEE (185 aa)) is ATPase domain. Residue Lys471 forms a Glycyl lysine isopeptide (Lys-Gly) (interchain with G-Cter in SUMO2) linkage. 480-487 (GLPGAGKT) provides a ligand contact to ATP. Lys492 and Lys500 each carry N6-acetyllysine; alternate. Residues Lys492 and Lys500 each participate in a glycyl lysine isopeptide (Lys-Gly) (interchain with G-Cter in SUMO2); alternate cross-link. Thr508 bears the Phosphothreonine mark. Residue Lys512 forms a Glycyl lysine isopeptide (Lys-Gly) (interchain with G-Cter in SUMO2) linkage. The residue at position 527 (Lys527) is an N6-acetyllysine. Lys541 is modified (N6-acetyllysine; alternate). A Glycyl lysine isopeptide (Lys-Gly) (interchain with G-Cter in SUMO2); alternate cross-link involves residue Lys541. Residue Lys550 forms a Glycyl lysine isopeptide (Lys-Gly) (interchain with G-Cter in SUMO2) linkage. Thr558 bears the Phosphothreonine mark. Residues Lys585 and Lys602 each participate in a glycyl lysine isopeptide (Lys-Gly) (interchain with G-Cter in SUMO2) cross-link. The actin-binding stretch occupies residues 587 to 602 (EDYKQRTQKKAEVEGK). An N6-acetyllysine; alternate modification is found at Lys611. Lys611 participates in a covalent cross-link: Glycyl lysine isopeptide (Lys-Gly) (interchain with G-Cter in SUMO2); alternate. A coiled-coil region spans residues 626-653 (DEITYVELQKEEAQKLLEQYKEESKKAL). Residues Lys640 and Lys646 each participate in a glycyl lysine isopeptide (Lys-Gly) (interchain with G-Cter in SUMO2) cross-link. A compositionally biased stretch (basic and acidic residues) spans 647 to 659 (EESKKALPPEKKQ). The tract at residues 647–729 (EESKKALPPE…GSGGIGYPYP (83 aa)) is disordered. Omega-N-methylarginine is present on Arg678. Residues 686–704 (GGFNMRGGNFRGGAPGNRG) are compositionally biased toward gly residues. The interval 690-715 (MRGGNFRGGAPGNRGGYNRRGNMPQR) is RNA-binding RGG-box. Asymmetric dimethylarginine is present on residues Arg691, Arg696, and Arg703. An asymmetric dimethylarginine; alternate mark is found at Arg709 and Arg715. An omega-N-methylarginine; alternate mark is found at Arg709 and Arg715. Positions 715 to 725 (RGGGGGSGGIG) are enriched in gly residues. An asymmetric dimethylarginine mark is found at Arg730 and Arg737. A disordered region spans residues 745-774 (NYNRGGMPNRGNYNQNFRGRGNNRGYKNQS). Lys789 is subject to N6-acetyllysine; alternate. Residue Lys789 forms a Glycyl lysine isopeptide (Lys-Gly) (interchain with G-Cter in SUMO2); alternate linkage.

As to quaternary structure, oligomer (via ATPase domain and RNA-binding RGG-box region); oligomerization occurs upon ATP-binding in a chromatin-associated RNAs (caRNAs)- and transcription-dependent manner and is required for chromatin decompaction. ATP hydrolysis is required to cycle from an oligomeric to monomeric state to compact chromatin. Component of the coding region determinant (CRD)-mediated complex, composed of DHX9, HNRNPU, IGF2BP1, SYNCRIP and YBX1. Identified in the spliceosome C complex. Identified in a IGF2BP1-dependent mRNP granule complex containing untranslated mRNAs. Associates with heterogeneous nuclear ribonucleoprotein (hnRNP) particles. Associates (via middle region) with the C-terminal domain (CTD) RNA polymerase II (Pol II) holoenzyme; this association occurs in a RNA-independent manner. Associates (via middle region) with the core-TFIIH basal transcription factor complex; this association inhibits the CTD phosphorylation of RNA polymerase II holoenzyme by down-regulating TFIIH kinase activity. Associates with the telomerase holoenzyme complex. Associates with spindle microtubules (MTs) in a TPX2-dependent manner. Interacts (via C-terminus) with actin; this interaction is direct and mediates association with the phosphorylated CTD of RNA polymerase II and is disrupted in presence of the long non-coding H19 RNA. Interacts with AURKA. Interacts (via C-terminus) with CBX5; this interaction is, at least in part, RNA-dependent. Interacts with CR2. Interacts with CRY1. Interacts (via C-terminus) with EP300; this interaction enhances DNA-binding to nuclear scaffold/matrix attachment region (S/MAR) elements. Interacts with ERBB4. Interacts with GEMIN5. Interacts with IGF2BP1. Interacts with IGF2BP2 and IGF2BP3. Interacts with NCL; this interaction occurs during mitosis. Interacts (via C-terminus) with NR3C1 (via C-terminus). Interacts with PLK1; this interaction induces phosphorylation of HNRNPU at Ser-58 in mitosis. Interacts with POU3F4. Interacts with SMARCA4; this interaction occurs in embryonic stem cells and stimulates global Pol II-mediated transcription. Interacts (via C-terminus) with TOP2A; this interaction protects the topoisomerase TOP2A from degradation and positively regulates the relaxation of supercoiled DNA by TOP2A in a RNA-dependent manner. Interacts with TPX2; this interaction recruits HNRNPU to spindle microtubules (MTs). Interacts with UBQLN2. Interacts (via RNA-binding RGG-box region) with ZBTB7B; the interaction facilitates the recruitment of long non-coding RNA Blnc1 by ZBTB7B. Interacts with ERCC6. Post-translationally, cleaved at Asp-94 by CASP3 during T-cell apoptosis, resulting in a loss of DNA- and chromatin-binding activities. In terms of processing, extensively phosphorylated. Phosphorylated on Ser-58 by PLK1 and dephosphorylated by protein phosphatase 2A (PP2A) in mitosis. Arg-709 and Arg-715 are dimethylated, probably to asymmetric dimethylarginine. Post-translationally, citrullinated by PADI4.

It localises to the nucleus. Its subcellular location is the nucleus matrix. It is found in the chromosome. The protein resides in the nucleus speckle. The protein localises to the cytoplasm. It localises to the cytoskeleton. Its subcellular location is the microtubule organizing center. It is found in the centrosome. The protein resides in the centromere. The protein localises to the kinetochore. It localises to the spindle. Its subcellular location is the spindle pole. It is found in the midbody. The protein resides in the cell surface. The protein localises to the cytoplasmic granule. In terms of biological role, DNA- and RNA-binding protein involved in several cellular processes such as nuclear chromatin organization, telomere-length regulation, transcription, mRNA alternative splicing and stability, Xist-mediated transcriptional silencing and mitotic cell progression. Plays a role in the regulation of interphase large-scale gene-rich chromatin organization through chromatin-associated RNAs (caRNAs) in a transcription-dependent manner, and thereby maintains genomic stability. Required for the localization of the long non-coding Xist RNA on the inactive chromosome X (Xi) and the subsequent initiation and maintenance of X-linked transcriptional gene silencing during X-inactivation. Plays a role as a RNA polymerase II (Pol II) holoenzyme transcription regulator. Promotes transcription initiation by direct association with the core-TFIIH basal transcription factor complex for the assembly of a functional pre-initiation complex with Pol II in a actin-dependent manner. Blocks Pol II transcription elongation activity by inhibiting the C-terminal domain (CTD) phosphorylation of Pol II and dissociates from Pol II pre-initiation complex prior to productive transcription elongation. Positively regulates CBX5-induced transcriptional gene silencing and retention of CBX5 in the nucleus. Negatively regulates glucocorticoid-mediated transcriptional activation. Key regulator of transcription initiation and elongation in embryonic stem cells upon leukemia inhibitory factor (LIF) signaling. Involved in the long non-coding RNA H19-mediated Pol II transcriptional repression. Participates in the circadian regulation of the core clock component BMAL1 transcription. Plays a role in the regulation of telomere length. Plays a role as a global pre-mRNA alternative splicing modulator by regulating U2 small nuclear ribonucleoprotein (snRNP) biogenesis. Plays a role in mRNA stability. Component of the CRD-mediated complex that promotes MYC mRNA stabilization. Enhances the expression of specific genes, such as tumor necrosis factor TNFA, by regulating mRNA stability, possibly through binding to the 3'-untranslated region (UTR). Plays a role in mitotic cell cycle regulation. Involved in the formation of stable mitotic spindle microtubules (MTs) attachment to kinetochore, spindle organization and chromosome congression. Phosphorylation at Ser-58 by PLK1 is required for chromosome alignement and segregation and progression through mitosis. Also contributes to the targeting of AURKA to mitotic spindle MTs. Binds to double- and single-stranded DNA and RNA, poly(A), poly(C) and poly(G) oligoribonucleotides. Binds to chromatin-associated RNAs (caRNAs). Associates with chromatin to scaffold/matrix attachment region (S/MAR) elements in a chromatin-associated RNAs (caRNAs)-dependent manner. Binds (via RNA-binding RGG-box region) to the long non-coding Xist RNA; this binding is direct and bridges the Xist RNA and the inactive chromosome X (Xi). Binds the long non-coding H19 RNA. Binds to SMN1/2 pre-mRNAs at G/U-rich regions. Binds to small nuclear RNAs (snRNAs). Binds to the 3'-UTR of TNFA mRNA. Also negatively regulates embryonic stem cell differentiation upon LIF signaling. Required for embryonic development. Binds to brown fat long non-coding RNA 1 (Blnc1); facilitates the recruitment of Blnc1 by ZBTB7B required to drive brown and beige fat development and thermogenesis. This chain is Heterogeneous nuclear ribonucleoprotein U, found in Mus musculus (Mouse).